Consider the following 160-residue polypeptide: Transcription elongation factor GreA (160 aa).

Residues M1–R72 adopt a coiled-coil conformation.

This sequence belongs to the GreA/GreB family.

Functionally, necessary for efficient RNA polymerase transcription elongation past template-encoded arresting sites. The arresting sites in DNA have the property of trapping a certain fraction of elongating RNA polymerases that pass through, resulting in locked ternary complexes. Cleavage of the nascent transcript by cleavage factors such as GreA or GreB allows the resumption of elongation from the new 3'terminus. GreA releases sequences of 2 to 3 nucleotides. This chain is Transcription elongation factor GreA, found in Streptococcus thermophilus (strain ATCC BAA-491 / LMD-9).